Reading from the N-terminus, the 486-residue chain is Ribosomal RNA small subunit methyltransferase F (486 aa).

Residues 124 to 130 (ASAPGSK), E148, D175, and D193 each bind S-adenosyl-L-methionine. The active-site Nucleophile is the C246.

It belongs to the class I-like SAM-binding methyltransferase superfamily. RsmB/NOP family.

It localises to the cytoplasm. It carries out the reaction cytidine(1407) in 16S rRNA + S-adenosyl-L-methionine = 5-methylcytidine(1407) in 16S rRNA + S-adenosyl-L-homocysteine + H(+). In terms of biological role, specifically methylates the cytosine at position 1407 (m5C1407) of 16S rRNA. This Shewanella putrefaciens (strain CN-32 / ATCC BAA-453) protein is Ribosomal RNA small subunit methyltransferase F.